The chain runs to 162 residues: UPF0114 protein Shewmr4_0646 (162 aa).

The next 4 helical transmembrane spans lie at 15 to 35 (IMAPIYLGLSLVLLGLGIKFF), 53 to 73 (LVLVTLSLIDITLVGGLIVMV), 108 to 128 (KVAASIVAISSIHLLKIFMDV), and 136 to 156 (IMWYLLIHITFVVSAFAMGYL).

Belongs to the UPF0114 family.

It is found in the cell membrane. The chain is UPF0114 protein Shewmr4_0646 from Shewanella sp. (strain MR-4).